The following is a 369-amino-acid chain: Short chain dehydrogenase rstn4 (369 aa).

NADP(+) is bound by residues Lys-88, Asp-111, Asn-138, Tyr-234, and Lys-238. Tyr-234 acts as the Proton donor in catalysis. The active-site Lowers pKa of active site Tyr is the Lys-238.

Belongs to the short-chain dehydrogenases/reductases (SDR) family.

Its pathway is antifungal biosynthesis. Its function is as follows. Short chain dehydrogenase; part of the gene cluster that mediates the biosynthesis of the tetrahydropyranyl antifungal agent restricticin that acts as an inhibitor of CYP51 and blocks the ergosterol biosynthesis. The highly reducing polyketide synthase rstn3, the short chain dehydrogenase rstn4, the cyclase rstn5, the FAD-dependent monooxygenase rstn6 and the enoylreductase rstn7 are required to generate the first stable intermediate desmethylrestrictinol. Rstn3 with rstn7 biosynthesize the first polyketide chain intermediate that is reduced by rstn4, followed by epoxidation by rstn6 before 6-endo cyclization via epoxide opening by rstn5 leads to desmethylrestrictinol. The methyltransferase rstn1 then catalyzes the C4 O-methylation of desmethylrestrictinol to produce restrictinol, and the nonribosomal peptide synthetase rstn8 catalyzes the C3 esterification of restrictinol with glycine that leads to restricticin. The sequence is that of Short chain dehydrogenase rstn4 from Aspergillus nomiae NRRL (strain ATCC 15546 / NRRL 13137 / CBS 260.88 / M93).